Here is a 148-residue protein sequence, read N- to C-terminus: Small ribosomal subunit protein bS16 (148 aa).

Residues 107–148 are disordered; that stretch reads AAARAAAGAEDRPATTPKKAKKAASADGADAPAADAPTAAGQ. Low complexity predominate over residues 129-148; that stretch reads AASADGADAPAADAPTAAGQ.

This sequence belongs to the bacterial ribosomal protein bS16 family.

In Frankia alni (strain DSM 45986 / CECT 9034 / ACN14a), this protein is Small ribosomal subunit protein bS16.